The chain runs to 405 residues: Dihydrolipoyllysine-residue succinyltransferase component of 2-oxoglutarate dehydrogenase complex (405 aa).

A Lipoyl-binding domain is found at 3–78; the sequence is SVDILVPDLP…TSRQILGRLR (76 aa). Lysine 44 carries the post-translational modification N6-lipoyllysine. The tract at residues 75-111 is disordered; it reads GRLREGNSAGKETSAKSEEKASTPAQRQQASLEEQNN. Residues 97–111 are compositionally biased toward polar residues; the sequence is TPAQRQQASLEEQNN. The Peripheral subunit-binding (PSBD) domain occupies 113–150; the sequence is ALSPAIRRLLAEHNLDASAIKGTGVGGRLTREDVEKHL. Residue lysine 148 is modified to N6-acetyllysine. Low complexity predominate over residues 153-173; the sequence is APAKESAPAAAAPAAQPALAA. Residues 153–178 are disordered; sequence APAKESAPAAAAPAAQPALAARSEKR. Catalysis depends on residues histidine 376 and aspartate 380.

This sequence belongs to the 2-oxoacid dehydrogenase family. Forms a 24-polypeptide structural core with octahedral symmetry. Part of the 2-oxoglutarate dehydrogenase (OGDH) complex composed of E1 (2-oxoglutarate dehydrogenase), E2 (dihydrolipoamide succinyltransferase) and E3 (dihydrolipoamide dehydrogenase); the complex contains multiple copies of the three enzymatic components (E1, E2 and E3). Interacts with SucA (via N-terminus), the E1 component of OGDH complex. It depends on (R)-lipoate as a cofactor.

It carries out the reaction N(6)-[(R)-dihydrolipoyl]-L-lysyl-[protein] + succinyl-CoA = N(6)-[(R)-S(8)-succinyldihydrolipoyl]-L-lysyl-[protein] + CoA. The protein operates within amino-acid degradation; L-lysine degradation via saccharopine pathway; glutaryl-CoA from L-lysine: step 6/6. In terms of biological role, E2 component of the 2-oxoglutarate dehydrogenase (OGDH) complex which catalyzes the second step in the conversion of 2-oxoglutarate to succinyl-CoA and CO(2). The sequence is that of Dihydrolipoyllysine-residue succinyltransferase component of 2-oxoglutarate dehydrogenase complex (sucB) from Escherichia coli O157:H7.